A 402-amino-acid polypeptide reads, in one-letter code: MKLTDLSNPAFLENPYPLYETLRAQAPFVSIGPNALMTGRYSLVDSLLHNRNMGKKYMESMRVRYGDSAADMPLFQAFSRMFITINPPAHTHLRGLVMQAFTGRESESMRPLAIDTAHQLIDNFEQKPSVDLVAEFAFPFPMQIICKMMDVDIGDAVTLGIAVSKIAKVFDPSPMSADELVHASTAYEELAQYFTKLIELRRTHPGTDLISMFLRAEEDGEKLTHDEIVSNVIMLLIAGYETTSNMIGNALIALHRHPEQLALLKSDLSLMPQAVSECLRYDGSVQFTMRAAMDDIEVEGELVPRGTVVFLMLGAANRDPAQFTHPDQLDITRKQGRLQSFGAGIHHCLGYRLALIELECALTTLFERLPHLRLAHLDALNWNQRSNLRGVNTLIVDLHAKN.

Cys-348 serves as a coordination point for heme.

Belongs to the cytochrome P450 family. The cofactor is heme.

The sequence is that of Putative cytochrome P450 133B1 (cyp133B1) from Xylella fastidiosa (strain 9a5c).